The chain runs to 179 residues: ATP-dependent protease subunit HslV (179 aa).

The active site involves Thr6. Positions 164, 167, and 170 each coordinate Na(+).

It belongs to the peptidase T1B family. HslV subfamily. As to quaternary structure, a double ring-shaped homohexamer of HslV is capped on each side by a ring-shaped HslU homohexamer. The assembly of the HslU/HslV complex is dependent on binding of ATP.

The protein localises to the cytoplasm. It catalyses the reaction ATP-dependent cleavage of peptide bonds with broad specificity.. With respect to regulation, allosterically activated by HslU binding. Its function is as follows. Protease subunit of a proteasome-like degradation complex believed to be a general protein degrading machinery. This is ATP-dependent protease subunit HslV from Listeria monocytogenes serotype 4b (strain CLIP80459).